Here is a 329-residue protein sequence, read N- to C-terminus: Prostaglandin reductase 1 (329 aa).

Threonine 18 bears the Phosphothreonine mark. Serine 20 carries the phosphoserine modification. Residues 152-155, lysine 178, tyrosine 193, asparagine 217, 239-245, 270-272, and asparagine 321 each bind NADP(+); these read GAVG, CGAISVY, and FIV. Position 178 is an N6-(2-hydroxyisobutyryl)lysine; alternate (lysine 178). The residue at position 178 (lysine 178) is an N6-acetyllysine; alternate.

It belongs to the NADP-dependent oxidoreductase L4BD family. As to quaternary structure, monomer or homodimer. Detected in small intestine, kidney, liver, spleen and stomach (at protein level). Detected in small intestine, kidney and liver.

The protein localises to the cytoplasm. The catalysed reaction is 13,14-dihydro-15-oxo-prostaglandin E1 + NADP(+) = 15-oxoprostaglandin E1 + NADPH + H(+). It catalyses the reaction 13,14-dihydro-15-oxo-prostaglandin E2 + NAD(+) = 15-oxoprostaglandin E2 + NADH + H(+). It carries out the reaction 13,14-dihydro-15-oxo-prostaglandin F1alpha + NADP(+) = 15-oxoprostaglandin F1alpha + NADPH + H(+). The enzyme catalyses 13,14-dihydro-15-oxo-PGF2alpha + NADP(+) = 15-oxoprostaglandin F2alpha + NADPH + H(+). The catalysed reaction is leukotriene B4 + NADP(+) = 12-oxo-leukotriene B4 + NADPH + H(+). It catalyses the reaction 20-hydroxy-leukotriene B4 + NADP(+) = 12-oxo-20-hydroxy-leukotriene B4 + NADPH + H(+). It carries out the reaction 6-trans-leukotriene B4 + NADP(+) = 12-oxo-(5S)-hydroxy-(6E,8E,10E,14Z)-eicosatetraenoate + NADPH + H(+). The enzyme catalyses (5S,12S)-dihydroxy-(6E,10E,12E,14Z)-eicosatetraenoate + NADP(+) = 12-oxo-(5S)-hydroxy-(6E,8E,10E,14Z)-eicosatetraenoate + NADPH + H(+). The catalysed reaction is an n-alkanal + NADP(+) = an alk-2-enal + NADPH + H(+). It catalyses the reaction hexanal + NADP(+) = (E)-hex-2-enal + NADPH + H(+). It carries out the reaction octanal + NADP(+) = (2E)-octenal + NADPH + H(+). The enzyme catalyses decanal + NADP(+) = (2E)-decenal + NADPH + H(+). The catalysed reaction is dodecanal + NADP(+) = (2E)-dodecenal + NADPH + H(+). It catalyses the reaction 4-hydroxynonanal + NADP(+) = (E)-4-hydroxynon-2-enal + NADPH + H(+). It carries out the reaction pentan-2-one + NADP(+) = (E)-pent-3-en-2-one + NADPH + H(+). The enzyme catalyses nonan-2-one + NADP(+) = (3E)-nonen-2-one + NADPH + H(+). Functionally, NAD(P)H-dependent oxidoreductase involved in metabolic inactivation of pro- and anti-inflammatory eicosanoids: prostaglandins (PG), leukotrienes (LT) and lipoxins (LX). Catalyzes with high efficiency the reduction of the 13,14 double bond of 15-oxoPGs, including 15-oxo-PGE1, 15-oxo-PGE2, 15-oxo-PGF1-alpha and 15-oxo-PGF2-alpha. Catalyzes with lower efficiency the oxidation of the hydroxyl group at C12 of LTB4 and its derivatives, converting them into biologically less active 12-oxo-LTB4 metabolites. Reduces 15-oxo-LXA4 to 13,14 dihydro-15-oxo-LXA4, enhancing neutrophil recruitment at the inflammatory site. Plays a role in metabolic detoxification of alkenals and ketones. Reduces alpha,beta-unsaturated alkenals and ketones, particularly those with medium-chain length, showing highest affinity toward (2E)-decenal and (3E)-3-nonen-2-one. May inactivate 4-hydroxy-2-nonenal, a cytotoxic lipid constituent of oxidized low-density lipoprotein particles. This chain is Prostaglandin reductase 1 (Ptgr1), found in Cavia porcellus (Guinea pig).